The chain runs to 474 residues: Gamma-aminobutyric acid receptor subunit beta-1 (474 aa).

The N-terminal stretch at 1–25 (MWTVQNRESLGLLSFPVMVAMVCCA) is a signal peptide. Residues 26 to 245 (HSSNEPSNMS…SFRLKRNIGY (220 aa)) lie on the Extracellular side of the membrane. N-linked (GlcNAc...) asparagine glycosylation is found at Asn33 and Asn105. Position 122 (Tyr122) interacts with histamine. Cys161 and Cys175 are joined by a disulfide. The N-linked (GlcNAc...) asparagine glycan is linked to Asn174. Histamine is bound by residues 181–182 (SY) and Thr227. 4-aminobutanoate-binding residues include Tyr182 and Thr227. Transmembrane regions (helical) follow at residues 246–267 (FILQ…SFWI), 271–293 (ASAA…STHL), and 305–327 (AIDI…YAFV). At 328 to 451 (NYIFFGKGPQ…DLTDVNSIDK (124 aa)) the chain is on the cytoplasmic side. The chain crosses the membrane as a helical span at residues 452–473 (WSRMFFPITFSLFNVVYWLYYV).

The protein belongs to the ligand-gated ion channel (TC 1.A.9) family. Gamma-aminobutyric acid receptor (TC 1.A.9.5) subfamily. GABRB1 sub-subfamily. In terms of assembly, heteropentamer, formed by a combination of alpha (GABRA1-6), beta (GABRB1-3), gamma (GABRG1-3), delta (GABRD), epsilon (GABRE), rho (GABRR1-3), pi (GABRP) and theta (GABRQ) chains, each subunit exhibiting distinct physiological and pharmacological properties. Binds UBQLN1.

The protein resides in the postsynaptic cell membrane. The protein localises to the cell membrane. The enzyme catalyses chloride(in) = chloride(out). With respect to regulation, potentiated by histamine. Its function is as follows. Beta subunit of the heteropentameric ligand-gated chloride channel gated by gamma-aminobutyric acid (GABA), a major inhibitory neurotransmitter in the brain. GABA-gated chloride channels, also named GABA(A) receptors (GABAAR), consist of five subunits arranged around a central pore and contain GABA active binding site(s) located at the alpha and beta subunit interface(s). When activated by GABA, GABAARs selectively allow the flow of chloride anions across the cell membrane down their electrochemical gradient. Chloride influx into the postsynaptic neuron following GABAAR opening decreases the neuron ability to generate a new action potential, thereby reducing nerve transmission. Beta-containing GABAARs can simultaneously bind GABA and histamine where histamine binds at the interface of two neighboring beta subunits, which may be involved in the regulation of sleep and wakefulness. In Mus musculus (Mouse), this protein is Gamma-aminobutyric acid receptor subunit beta-1.